The sequence spans 435 residues: ATP-dependent RNA helicase DBP8 (435 aa).

The Q motif signature appears at 4-32 (SEFKSLGCSKWLVEALNAMKIVQPTAIQK). Residues 35–211 (IPEILKGRDC…DAPQTEGKPP (177 aa)) form the Helicase ATP-binding domain. 48–55 (ANTGSGKT) is an ATP binding site. The DEAD box signature appears at 157–160 (DEAD). In terms of domain architecture, Helicase C-terminal spans 244–391 (YLYQILTSEK…FTDVGDTAVI (148 aa)). Basic and acidic residues predominate over residues 409-429 (MDKEGFGERRKLQKRKNESKE). Residues 409-435 (MDKEGFGERRKLQKRKNESKEKTHRRT) are disordered.

The protein belongs to the DEAD box helicase family. DDX49/DBP8 subfamily.

Its subcellular location is the nucleus. The protein resides in the nucleolus. The enzyme catalyses ATP + H2O = ADP + phosphate + H(+). Functionally, ATP-binding RNA helicase involved in 40S ribosomal subunit biogenesis and is required for the normal formation of 18S rRNAs through pre-rRNA processing at A0, A1 and A2 sites. Required for vegetative growth. The protein is ATP-dependent RNA helicase DBP8 (DBP8) of Kluyveromyces lactis (strain ATCC 8585 / CBS 2359 / DSM 70799 / NBRC 1267 / NRRL Y-1140 / WM37) (Yeast).